A 471-amino-acid polypeptide reads, in one-letter code: Bifunctional protein GlmU (471 aa).

The segment at 1 to 232 (MSDITAVLLA…EEDALAPNDR (232 aa)) is pyrophosphorylase. Residues 9–12 (LAAG), Lys-23, Gln-73, 78–79 (GT), 102–104 (YGD), Gly-141, Glu-157, and Asn-230 each bind UDP-N-acetyl-alpha-D-glucosamine. Mg(2+) is bound at residue Asp-104. Position 230 (Asn-230) interacts with Mg(2+). The interval 233–253 (VELARAEARLRRQINERHMRN) is linker. Residues 254–471 (GVTIINPDAT…RQRKMNREGT (218 aa)) are N-acetyltransferase. Residues Arg-335 and Lys-353 each coordinate UDP-N-acetyl-alpha-D-glucosamine. Catalysis depends on His-365, which acts as the Proton acceptor. Residues Tyr-368 and Asn-379 each coordinate UDP-N-acetyl-alpha-D-glucosamine. Acetyl-CoA-binding positions include Ala-382, 388-389 (NY), Ala-425, and Arg-444.

The protein in the N-terminal section; belongs to the N-acetylglucosamine-1-phosphate uridyltransferase family. In the C-terminal section; belongs to the transferase hexapeptide repeat family. Homotrimer. The cofactor is Mg(2+).

It is found in the cytoplasm. The catalysed reaction is alpha-D-glucosamine 1-phosphate + acetyl-CoA = N-acetyl-alpha-D-glucosamine 1-phosphate + CoA + H(+). It catalyses the reaction N-acetyl-alpha-D-glucosamine 1-phosphate + UTP + H(+) = UDP-N-acetyl-alpha-D-glucosamine + diphosphate. Its pathway is nucleotide-sugar biosynthesis; UDP-N-acetyl-alpha-D-glucosamine biosynthesis; N-acetyl-alpha-D-glucosamine 1-phosphate from alpha-D-glucosamine 6-phosphate (route II): step 2/2. The protein operates within nucleotide-sugar biosynthesis; UDP-N-acetyl-alpha-D-glucosamine biosynthesis; UDP-N-acetyl-alpha-D-glucosamine from N-acetyl-alpha-D-glucosamine 1-phosphate: step 1/1. It functions in the pathway bacterial outer membrane biogenesis; LPS lipid A biosynthesis. Functionally, catalyzes the last two sequential reactions in the de novo biosynthetic pathway for UDP-N-acetylglucosamine (UDP-GlcNAc). The C-terminal domain catalyzes the transfer of acetyl group from acetyl coenzyme A to glucosamine-1-phosphate (GlcN-1-P) to produce N-acetylglucosamine-1-phosphate (GlcNAc-1-P), which is converted into UDP-GlcNAc by the transfer of uridine 5-monophosphate (from uridine 5-triphosphate), a reaction catalyzed by the N-terminal domain. The polypeptide is Bifunctional protein GlmU (Symbiobacterium thermophilum (strain DSM 24528 / JCM 14929 / IAM 14863 / T)).